Here is an 881-residue protein sequence, read N- to C-terminus: Putative cation exchanger C521.04c (881 aa).

The span at 1 to 19 (MSQPADINQSESSAETITQ) shows a compositional bias: polar residues. Disordered stretches follow at residues 1 to 39 (MSQP…EQNL) and 52 to 142 (ADAT…LRSE). Positions 63–77 (NDRDIYSPREIDQYT) are enriched in basic and acidic residues. A compositionally biased stretch (polar residues) spans 83–95 (RTDPSTSTISNAR). The segment covering 99–113 (RNSVSRLSRSSSNVR) has biased composition (low complexity). Phosphoserine is present on serine 129. The next 8 membrane-spanning stretches (helical) occupy residues 200–220 (IWLI…YIFF), 329–349 (LIIA…IFFV), 407–427 (IYII…FGFF), 438–458 (VFLF…IGMA), 471–491 (GAFI…SVAL), 504–524 (IGSI…AGAI), 537–557 (GATS…TMLF), and 594–614 (LPFT…GLWF). The tract at residues 641 to 717 (VGEPVNQDTA…SQNSHGDDAP (77 aa)) is disordered. Polar residues predominate over residues 646–657 (NQDTAGNMSDSS). Positions 678-688 (SSGLSSNGSEN) are enriched in low complexity. 5 consecutive transmembrane segments (helical) span residues 726 to 746 (IILL…VEHV), 762 to 782 (LTLF…SFAL), 794 to 814 (SAYA…YSLF), 828 to 848 (LFTM…VFLL), and 859 to 879 (YFKG…FTFF).

Belongs to the Ca(2+):cation antiporter (CaCA) (TC 2.A.19) family.

The protein resides in the endoplasmic reticulum membrane. Functionally, putative cation exchanger. The polypeptide is Putative cation exchanger C521.04c (Schizosaccharomyces pombe (strain 972 / ATCC 24843) (Fission yeast)).